The primary structure comprises 85 residues: MQSTMKMFGIILMVIFSVSCGPSAPQMKTREVAERTHKCSLVRGTCKSECNSWEYKYNYCHTEPCCVVREYKRMEKLLSTPKYTT.

The first 23 residues, 1-23 (MQSTMKMFGIILMVIFSVSCGPS), serve as a signal peptide directing secretion. Intrachain disulfides connect cysteine 39–cysteine 65, cysteine 46–cysteine 60, and cysteine 50–cysteine 66.

It belongs to the beta-defensin family.

The protein localises to the secreted. In terms of biological role, has antibacterial activity. This chain is Beta-defensin 18 (Defb18), found in Mus musculus (Mouse).